The primary structure comprises 298 residues: TLR adapter interacting with SLC15A4 on the lysosome (298 aa).

A pLxIS motif motif is present at residues 287–291 (SLHIS). Position 291 is a phosphoserine (serine 291).

Interacts (via pLxIS motif) with IRF5; leading to IRF5 activation. Interacts with SLC15A4; leading to its recruitment to endolysosome. In terms of processing, the phosphorylated pLxIS motif constitutes an IRF5-binding motif, leading to recruitment of the transcription factor IRF5 to induce type-I interferons and other cytokines.

The protein localises to the lysosome membrane. It is found in the endosome membrane. Its subcellular location is the nucleus. The protein resides in the cytoplasm. In terms of biological role, innate immune adapter that mediates the recruitment and activation of IRF5 downstream of endolysosomal toll-like receptors TLR7, TLR8 and TLR9. Following recruitment to endolysosome by SLC15A4 downstream of TLR7, TLR8 and TLR9, specifically recruits IRF5 transcription factor via its pLxIS motif, leading to IRF5 activation and subsequent expression of type I interferons. Plays a role in the regulation of endolysosomal pH in immune cells such as B-cells, dendritic cells and monocytes. The sequence is that of TLR adapter interacting with SLC15A4 on the lysosome from Mus musculus (Mouse).